The chain runs to 891 residues: DNA mismatch repair protein MutS (891 aa).

Residue 632-639 (GPNMAGKS) participates in ATP binding.

The protein belongs to the DNA mismatch repair MutS family.

In terms of biological role, this protein is involved in the repair of mismatches in DNA. It is possible that it carries out the mismatch recognition step. This protein has a weak ATPase activity. This Rhodopirellula baltica (strain DSM 10527 / NCIMB 13988 / SH1) protein is DNA mismatch repair protein MutS.